A 511-amino-acid polypeptide reads, in one-letter code: ESX-1 secretion system protein EccD1 (511 aa).

Serine 2 carries the N-acetylserine modification. The Cytoplasmic portion of the chain corresponds to 2 to 143; sequence SAPAVAAGPT…PEFDRTALNR (142 aa). A helical transmembrane segment spans residues 144–164; sequence FVGAAIPLLTAPVIGMAMRAW. Residues 165 to 170 are Periplasmic-facing; the sequence is WETGRS. The helical transmembrane segment at 171–191 threads the bilayer; that stretch reads LWWPLAIGILGIAVLVGSFVA. The Cytoplasmic segment spans residues 192 to 202; that stretch reads NRFYQSGHLAE. A helical membrane pass occupies residues 203-223; it reads CLLVTTYLLIATAAALAVPLP. Residues 224–227 lie on the Periplasmic side of the membrane; sequence RGVN. Residues 228–248 traverse the membrane as a helical segment; the sequence is SLGAPQVAGAATAVLFLTLMT. The Cytoplasmic segment spans residues 249 to 257; that stretch reads RGGPRKRHE. A helical membrane pass occupies residues 258-278; the sequence is LASFAVITAIAVIAAAAAFGY. Residues 279 to 285 are Periplasmic-facing; that stretch reads GYQDWVP. Residues 286-306 traverse the membrane as a helical segment; it reads AGGIAFGLFIVTNAAKLTVAV. Topologically, residues 307 to 367 are cytoplasmic; the sequence is ARIALPPIPV…TERSKLAKQL (61 aa). 2 helical membrane-spanning segments follow: residues 368-388 and 389-409; these read LIGYVTSGTLILAAGAIAVVV and RGHFFVHSLVVAGLITTVCGF. The Cytoplasmic portion of the chain corresponds to 410–420; it reads RSRLYAERWCA. The chain crosses the membrane as a helical span at residues 421-441; that stretch reads WALLAATVAIPTGLTAKLIIW. Topologically, residues 442 to 444 are periplasmic; sequence YPH. Residues 445 to 465 traverse the membrane as a helical segment; the sequence is YAWLLLSVYLTVALVALVVVG. At 466-482 the chain is on the cytoplasmic side; the sequence is SMAHVRRVSPVVKRTLE. A helical membrane pass occupies residues 483 to 503; it reads LIDGAMIAAIIPMLLWITGVY. Residues 504 to 511 lie on the Periplasmic side of the membrane; sequence DTVRNIRF.

Belongs to the EccD/Snm4 family. Possibly a homodimer. Part of the ESX-1 / type VII secretion system (T7SS), which is composed of cytosolic and membrane components. The ESX-1 membrane complex is composed of EccB1, EccCa1, EccCb1, EccD1 and EccE1.

Its subcellular location is the cell inner membrane. Functionally, part of the ESX-1 specialized secretion system, which delivers several virulence factors to host cells during infection, including the key virulence factors EsxA (ESAT-6) and EsxB (CFP-10). The polypeptide is ESX-1 secretion system protein EccD1 (Mycobacterium tuberculosis (strain ATCC 25618 / H37Rv)).